The sequence spans 137 residues: Putative FERT-1 protein (137 aa).

This Ascaris suum (Pig roundworm) protein is Putative FERT-1 protein (FERT-1).